Here is a 554-residue protein sequence, read N- to C-terminus: Glucose-6-phosphate isomerase (554 aa).

Catalysis depends on glutamate 359, which acts as the Proton donor. Active-site residues include histidine 390 and lysine 518.

Belongs to the GPI family.

The protein localises to the cytoplasm. It carries out the reaction alpha-D-glucose 6-phosphate = beta-D-fructose 6-phosphate. It participates in carbohydrate biosynthesis; gluconeogenesis. The protein operates within carbohydrate degradation; glycolysis; D-glyceraldehyde 3-phosphate and glycerone phosphate from D-glucose: step 2/4. Functionally, catalyzes the reversible isomerization of glucose-6-phosphate to fructose-6-phosphate. This Pseudomonas fluorescens protein is Glucose-6-phosphate isomerase.